The chain runs to 166 residues: uncharacterized protein (166 aa).

The interval 1–58 (MSSEITEGDLQKFHDEHFNAKAVNLWNVAFAQNDRGGNSESANVEYTQSVERYPDGTI) is may interact with smn1.

As to quaternary structure, part of the core SMN complex at least composed of smn1, yip11/gem2, gem6, gem7 and gem8. Interacts with smn1; the interaction is direct. Interacts with gem7; the interaction is direct.

The protein resides in the cytoplasm. The protein localises to the nucleus. In terms of biological role, the SMN complex catalyzes the assembly of small nuclear ribonucleoproteins (snRNPs), the building blocks of the spliceosome, and thereby plays an important role in the splicing of cellular pre-mRNAs. Most spliceosomal snRNPs contain a common set of Sm proteins SNRPB, SNRPD1, SNRPD2, SNRPD3, SNRPE, SNRPF and SNRPG that assemble in a heptameric protein ring on the Sm site of the small nuclear RNA to form the core snRNP (Sm core). In the cytosol, the Sm proteins SNRPD1, SNRPD2, SNRPE, SNRPF and SNRPG are trapped in an inactive 6S pICln-Sm complex by the chaperone CLNS1A that controls the assembly of the core snRNP. To assemble core snRNPs, the SMN complex accepts the trapped 5Sm proteins from CLNS1A forming an intermediate. Binding of snRNA inside 5Sm triggers eviction of the SMN complex, thereby allowing binding of SNRPD3 and SNRPB to complete assembly of the core snRNP. This is an uncharacterized protein from Schizosaccharomyces pombe (strain 972 / ATCC 24843) (Fission yeast).